Reading from the N-terminus, the 859-residue chain is Active breakpoint cluster region-related protein (859 aa).

Positions 26–84 (TDEYDGEGNEEQKGPPEGSETMPYIDESPTMSPQLSARSQGGGDGVSPTPPEGLAPGVE) are disordered. Over residues 54-64 (PTMSPQLSARS) the composition is skewed to polar residues. Position 57 is a phosphoserine (serine 57). A DH domain is found at 91-284 (MRKLVLSGFL…QNFLSSINED (194 aa)). The PH domain occupies 301–459 (QLVKDGFLVE…WREAIQKLQK (159 aa)). A C2 domain is found at 484–613 (TVHNIPVTSN…ETKNWHTDVI (130 aa)). In terms of domain architecture, Rho-GAP spans 647–845 (VKISVVTKRE…YYLQHPPISF (199 aa)).

As to quaternary structure, interacts with DLG4. Highly enriched in the brain. Much weaker expression in heart, lung and muscle.

It localises to the cell projection. Its subcellular location is the dendritic spine. It is found in the axon. The protein localises to the synapse. Its function is as follows. Protein with a unique structure having two opposing regulatory activities toward small GTP-binding proteins. The C-terminus is a GTPase-activating protein domain which stimulates GTP hydrolysis by RAC1, RAC2 and CDC42. Accelerates the intrinsic rate of GTP hydrolysis of RAC1 or CDC42, leading to down-regulation of the active GTP-bound form. The central Dbl homology (DH) domain functions as a guanine nucleotide exchange factor (GEF) that modulates the GTPases CDC42, RHOA and RAC1. Promotes the conversion of CDC42, RHOA and RAC1 from the GDP-bound to the GTP-bound form. Functions as an important negative regulator of neuronal RAC1 activity. Regulates macrophage functions such as CSF-1 directed motility and phagocytosis through the modulation of RAC1 activity. The chain is Active breakpoint cluster region-related protein from Homo sapiens (Human).